The sequence spans 399 residues: Elongation factor Tu (399 aa).

Residues 10–204 (KPHVNIGTIG…AVDASIPEPE (195 aa)) form the tr-type G domain. A G1 region spans residues 19 to 26 (GHVDHGKT). GTP is bound at residue 19–26 (GHVDHGKT). Residue Thr26 participates in Mg(2+) binding. The G2 stretch occupies residues 60 to 64 (GITIN). A G3 region spans residues 81–84 (DCPG). Residues 81-85 (DCPGH) and 136-139 (NKCD) each bind GTP. The interval 136 to 139 (NKCD) is G4. The tract at residues 174-176 (SGL) is G5.

Belongs to the TRAFAC class translation factor GTPase superfamily. Classic translation factor GTPase family. EF-Tu/EF-1A subfamily. As to quaternary structure, monomer.

Its subcellular location is the cytoplasm. The enzyme catalyses GTP + H2O = GDP + phosphate + H(+). GTP hydrolase that promotes the GTP-dependent binding of aminoacyl-tRNA to the A-site of ribosomes during protein biosynthesis. The sequence is that of Elongation factor Tu from Synechococcus sp. (strain CC9902).